Consider the following 70-residue polypeptide: Large ribosomal subunit protein bL31 (70 aa).

Cysteine 16, cysteine 18, cysteine 37, and cysteine 40 together coordinate Zn(2+).

The protein belongs to the bacterial ribosomal protein bL31 family. Type A subfamily. Part of the 50S ribosomal subunit. It depends on Zn(2+) as a cofactor.

Functionally, binds the 23S rRNA. The polypeptide is Large ribosomal subunit protein bL31 (Salmonella agona (strain SL483)).